Consider the following 331-residue polypeptide: Anthranilate phosphoribosyltransferase (331 aa).

Residues Gly-78, 81 to 82 (GD), Thr-86, 88 to 91 (NVST), 106 to 114 (KHGNYSVSS), and Ser-118 each bind 5-phospho-alpha-D-ribose 1-diphosphate. Gly-78 contributes to the anthranilate binding site. Ser-90 serves as a coordination point for Mg(2+). Asn-109 serves as a coordination point for anthranilate. An anthranilate-binding site is contributed by Arg-164. 2 residues coordinate Mg(2+): Asp-222 and Glu-223.

The protein belongs to the anthranilate phosphoribosyltransferase family. In terms of assembly, homodimer. Mg(2+) serves as cofactor.

It carries out the reaction N-(5-phospho-beta-D-ribosyl)anthranilate + diphosphate = 5-phospho-alpha-D-ribose 1-diphosphate + anthranilate. Its pathway is amino-acid biosynthesis; L-tryptophan biosynthesis; L-tryptophan from chorismate: step 2/5. Functionally, catalyzes the transfer of the phosphoribosyl group of 5-phosphorylribose-1-pyrophosphate (PRPP) to anthranilate to yield N-(5'-phosphoribosyl)-anthranilate (PRA). The protein is Anthranilate phosphoribosyltransferase of Haloarcula marismortui (strain ATCC 43049 / DSM 3752 / JCM 8966 / VKM B-1809) (Halobacterium marismortui).